A 358-amino-acid chain; its full sequence is Peptide chain release factor 1 (358 aa).

Gln-233 is subject to N5-methylglutamine.

It belongs to the prokaryotic/mitochondrial release factor family. In terms of processing, methylated by PrmC. Methylation increases the termination efficiency of RF1.

It localises to the cytoplasm. Peptide chain release factor 1 directs the termination of translation in response to the peptide chain termination codons UAG and UAA. This Staphylococcus saprophyticus subsp. saprophyticus (strain ATCC 15305 / DSM 20229 / NCIMB 8711 / NCTC 7292 / S-41) protein is Peptide chain release factor 1.